Here is a 325-residue protein sequence, read N- to C-terminus: UDP-N-acetylglucosamine transporter ROCK1 (325 aa).

Topologically, residues 1-13 are cytoplasmic; the sequence is MATANGAKSPSSM. The helical transmembrane segment at 14–34 threads the bilayer; the sequence is GPKVLFYSILLTLQYGAQPLI. The Lumenal portion of the chain corresponds to 35-42; it reads SKRCIRKD. A helical membrane pass occupies residues 43–63; that stretch reads VIVTSSVLTCEIVKVICALIL. Over 64-109 the chain is Cytoplasmic; the sequence is MARNGSLKGLAKEWTLMGSLTASGLPAAIYALQNSLLQISYRSLDS. A helical membrane pass occupies residues 110–130; it reads LTFSILNQTKIFFTAFFTFII. Residues 131 to 135 lie on the Lumenal side of the membrane; it reads LRQKQ. Residues 136 to 156 traverse the membrane as a helical segment; it reads SILQIGALCLLIMAAVLLSVG. The Cytoplasmic portion of the chain corresponds to 157–171; it reads EGSNKDSSGINADQK. Residues 172-192 form a helical membrane-spanning segment; it reads LFYGIIPVLAASVLSGLASSL. Over 193 to 203 the chain is Lumenal; the sequence is CQWASQVKKHS. The chain crosses the membrane as a helical span at residues 204-224; sequence SYLMTVEMSIVGSLCLLVSTL. The Cytoplasmic portion of the chain corresponds to 225–241; sequence KSPDGEAIKKYGFFHGW. Residues 242–262 form a helical membrane-spanning segment; it reads TALTLVPVISNALGGILVGLV. Residues 263-270 lie on the Lumenal side of the membrane; sequence TSHAGGVR. A helical membrane pass occupies residues 271–291; the sequence is KGFVIVSALLVTALLQFAFEG. Over 292–325 the chain is Cytoplasmic; it reads KPPSSYCLVALPLVMSSISMYQKYPYIDKKKKKV.

Belongs to the nucleotide-sugar transporter family. CMP-Sialate:CMP antiporter (TC 2.A.7.12) subfamily. Expressed in roots, cotyledons, leaves, stems, flowers and siliques.

It is found in the endoplasmic reticulum membrane. In terms of biological role, mediates the transport of UDP-linked acetylated hexosamines across the endoplasmic reticulum (ER) membrane. Facilitates UDP-N-acetylglucosamine (UDP-GlcNAc) and UDP-N-acetylgalactosamine (UDP-GalNAc) transport. Regulates the cytokinin signal in meristematic cells through modulating activity of cytokinin oxidases/dehydrogenases. Part of the ER quality control system, which determines the fate of aberrant proteins in the secretory pathway. This chain is UDP-N-acetylglucosamine transporter ROCK1, found in Arabidopsis thaliana (Mouse-ear cress).